The sequence spans 98 residues: MLWDLSGGMVDQRFLVILCMVAFLAGCTQSPVTASVIVMEMTGAQPVLIWLLISSIIASIISHQFSPKPFYHFAAGCFLQQMQARQAEELRSKTEQEK.

Transmembrane regions (helical) follow at residues 14–34 (FLVILCMVAFLAGCTQSPVTA) and 41–61 (MTGAQPVLIWLLISSIIASII).

It is found in the cell membrane. This is an uncharacterized protein from Haemophilus influenzae (strain ATCC 51907 / DSM 11121 / KW20 / Rd).